The chain runs to 129 residues: Thioredoxin-like 3-3 (129 aa).

Residues 1–10 show a composition bias toward basic and acidic residues; sequence MEEGEAKKTG. The tract at residues 1–30 is disordered; it reads MEEGEAKKTGLEGTGLSLPGSSHGNLRSAG. Residues 7–129 form the Thioredoxin domain; that stretch reads KKTGLEGTGL…RLHDRLWLHS (123 aa). Over residues 19–30 the composition is skewed to polar residues; it reads PGSSHGNLRSAG. Residues Cys58 and Cys61 each act as nucleophile in the active site. A disulfide bridge links Cys58 with Cys61.

This sequence belongs to the thioredoxin family.

In terms of biological role, probable thiol-disulfide oxidoreductase that may participate in various redox reactions. This Oryza sativa subsp. japonica (Rice) protein is Thioredoxin-like 3-3.